The primary structure comprises 578 residues: MLKRLDKIRFRGQKRDDFLDLVESPNASDTECGDEIPMKIPPTSLKDTEELKDPAGSGTIIMASGVAEYNRTESDRLNEVKGHLEIALLEKHFLQEELRKLREETNIDTLKQELEKERQRRTELEQKITDIAKTRTDESATQQLSKGPSQTNGADKQRSKTMCYRVQKWFYDKFGEYIEDFRFQPEECTVETEEPLSARRLTENMRRLKRGAKPVTNFVKNLSALSDWHSVYTSAIAFIIYMNAVWHGWAIPMFLFLAILRLSLNYLIARGWRIQWSIVPQVSETLELPKEDLTVSEKFQLVLDVAQKAQNLFGKMADILEKIKNLFMWVQPEMTQKLYIGLWAAFVASCFFHYKTIGLCMGLYAGIKFFLIDFIFKRCPRLRAKYDTPYIIWTSLPTDPQLKERTNATSSRRIQTVYSRGNLASSAPQGVSRDEETGRFHSTKKSSFHEIFSLLETERPLPACETGWRCCLINRDRKMPTDYIRNGILYVTENFLCFESSRSGSSKRNKVIKLTDITDIQKYKVLSVLPGSGMGIAVSTPSTQKPLVFGAMVHRDEAFETIFSQYVKITSAVTNSDT.

A coiled-coil region spans residues 83 to 135 (HLEIALLEKHFLQEELRKLREETNIDTLKQELEKERQRRTELEQKITDIAKTR). A disordered region spans residues 132–157 (AKTRTDESATQQLSKGPSQTNGADKQ). Residues 139–154 (SATQQLSKGPSQTNGA) are compositionally biased toward polar residues. A run of 3 helical transmembrane segments spans residues 236 to 256 (IAFIIYMNAVWHGWAIPMFLF), 334 to 354 (MTQKLYIGLWAAFVASCFFHY), and 356 to 376 (TIGLCMGLYAGIKFFLIDFIF). The 79-residue stretch at 446–524 (SSFHEIFSLL…TDITDIQKYK (79 aa)) folds into the GRAM domain.

The protein resides in the mitochondrion membrane. Its subcellular location is the endoplasmic reticulum membrane. Plays a role as a mediator of e2f1-induced apoptosis in the absence of p53/TP53. The chain is GRAM domain-containing protein 4 (gramd4) from Xenopus laevis (African clawed frog).